We begin with the raw amino-acid sequence, 422 residues long: Tyrosine--tRNA ligase (422 aa).

Tyr-36 is an L-tyrosine binding site. The 'HIGH' region motif lies at 41–50 (PTADSLHIGH). Tyr-175 and Gln-179 together coordinate L-tyrosine. The 'KMSKS' region motif lies at 235–239 (KFGKT). Position 238 (Lys-238) interacts with ATP. In terms of domain architecture, S4 RNA-binding spans 354–411 (TSLQEALTKSKLATSRSQARYFIKSNAITINAHKQSKIEYIFQDSDRIYNLYTLLKRG).

The protein belongs to the class-I aminoacyl-tRNA synthetase family. TyrS type 1 subfamily. Homodimer.

Its subcellular location is the cytoplasm. It carries out the reaction tRNA(Tyr) + L-tyrosine + ATP = L-tyrosyl-tRNA(Tyr) + AMP + diphosphate + H(+). Functionally, catalyzes the attachment of tyrosine to tRNA(Tyr) in a two-step reaction: tyrosine is first activated by ATP to form Tyr-AMP and then transferred to the acceptor end of tRNA(Tyr). This Blochmanniella floridana protein is Tyrosine--tRNA ligase.